An 88-amino-acid chain; its full sequence is Co-chaperonin GroES (88 aa).

Belongs to the GroES chaperonin family. Heptamer of 7 subunits arranged in a ring. Interacts with the chaperonin GroEL.

The protein resides in the cytoplasm. Its function is as follows. Together with the chaperonin GroEL, plays an essential role in assisting protein folding. The GroEL-GroES system forms a nano-cage that allows encapsulation of the non-native substrate proteins and provides a physical environment optimized to promote and accelerate protein folding. GroES binds to the apical surface of the GroEL ring, thereby capping the opening of the GroEL channel. The chain is Co-chaperonin GroES from Rubrobacter xylanophilus (strain DSM 9941 / JCM 11954 / NBRC 16129 / PRD-1).